The chain runs to 155 residues: Protein SprT-like (155 aa).

The SprT-like domain occupies 6–148 (LQRLVERVSL…VCGQCGGKLM (143 aa)). Histidine 67 is a binding site for Zn(2+). Residue glutamate 68 is part of the active site. Residue histidine 71 coordinates Zn(2+).

It belongs to the SprT family. It depends on Zn(2+) as a cofactor.

It is found in the cytoplasm. The protein is Protein SprT-like of Geobacillus sp. (strain WCH70).